The chain runs to 165 residues: Lipoprotein signal peptidase (165 aa).

3 helical membrane passes run 12–32 (WLWVVVAVLIIDLGSKFLILQ), 70–90 (WFFAGIAVGICVVLAVLMYRS), and 102–122 (ALIIGGALGNLFDRLWHGFVV). Catalysis depends on residues Asp-123 and Asp-141. A helical membrane pass occupies residues 137–157 (FNLADSAICIGAALIVLEGFL).

The protein belongs to the peptidase A8 family.

Its subcellular location is the cell inner membrane. The catalysed reaction is Release of signal peptides from bacterial membrane prolipoproteins. Hydrolyzes -Xaa-Yaa-Zaa-|-(S,diacylglyceryl)Cys-, in which Xaa is hydrophobic (preferably Leu), and Yaa (Ala or Ser) and Zaa (Gly or Ala) have small, neutral side chains.. It participates in protein modification; lipoprotein biosynthesis (signal peptide cleavage). This protein specifically catalyzes the removal of signal peptides from prolipoproteins. In Klebsiella aerogenes (strain ATCC 13048 / DSM 30053 / CCUG 1429 / JCM 1235 / KCTC 2190 / NBRC 13534 / NCIMB 10102 / NCTC 10006 / CDC 819-56) (Enterobacter aerogenes), this protein is Lipoprotein signal peptidase.